The sequence spans 579 residues: Probable pectinesterase/pectinesterase inhibitor 7 (579 aa).

The N-terminal stretch at 1-20 (MESPIFILITLSFFLQSVLA) is a signal peptide. Positions 22–185 (SQTLSNSSTI…TKLLGVSLAL (164 aa)) are pectinesterase inhibitor 7. 8 N-linked (GlcNAc...) asparagine glycosylation sites follow: N27, N115, N174, N274, N277, N287, N326, and N333. The interval 265-564 (VTVSQDGTGN…TVTGLFIEAD (300 aa)) is pectinesterase 7. Residue T342 coordinates substrate. The N-linked (GlcNAc...) asparagine glycan is linked to N359. Q372 lines the substrate pocket. Catalysis depends on D395, which acts as the Proton donor; for pectinesterase activity. Cysteines 409 and 429 form a disulfide. Residue D416 is the Nucleophile; for pectinesterase activity of the active site. N-linked (GlcNAc...) asparagine glycans are attached at residues N462 and N475. 2 residues coordinate substrate: R484 and W486. N-linked (GlcNAc...) asparagine glycans are attached at residues N526, N533, N547, and N553.

It in the N-terminal section; belongs to the PMEI family. The protein in the C-terminal section; belongs to the pectinesterase family. As to expression, expressed in siliques.

It localises to the secreted. It is found in the cell wall. It catalyses the reaction [(1-&gt;4)-alpha-D-galacturonosyl methyl ester](n) + n H2O = [(1-&gt;4)-alpha-D-galacturonosyl](n) + n methanol + n H(+). It participates in glycan metabolism; pectin degradation; 2-dehydro-3-deoxy-D-gluconate from pectin: step 1/5. In terms of biological role, acts in the modification of cell walls via demethylesterification of cell wall pectin. In Arabidopsis thaliana (Mouse-ear cress), this protein is Probable pectinesterase/pectinesterase inhibitor 7 (PME7).